Here is a 708-residue protein sequence, read N- to C-terminus: Leukotoxin translocation ATP-binding protein LktB (708 aa).

A Peptidase C39 domain is found at 1 to 126 (MEANHQRNDL…ACYQGQLILV (126 aa)). The 283-residue stretch at 155-437 (FLETLIVSIF…LAQLWQDFQQ (283 aa)) folds into the ABC transmembrane type-1 domain. The next 5 membrane-spanning stretches (helical) occupy residues 159 to 179 (LIVS…FQVV), 192 to 212 (LNII…LSGL), 270 to 290 (ALTS…MWYY), 296 to 316 (LVIL…SPIL), and 389 to 409 (VMVI…LSIG). Positions 469-704 (IAFKNIRFRY…SNGLYSYLHQ (236 aa)) constitute an ABC transporter domain. Residue 503–510 (GRSGSGKS) coordinates ATP.

It belongs to the ABC transporter superfamily. Protein-1 exporter (TC 3.A.1.109) family. In terms of assembly, homodimer.

The protein resides in the cell inner membrane. The catalysed reaction is ATP + H2O + proteinSide 1 = ADP + phosphate + proteinSide 2.. In terms of biological role, part of the ABC transporter complex LktBD involved in leukotoxin export. Transmembrane domains (TMD) form a pore in the inner membrane and the ATP-binding domain (NBD) is responsible for energy generation. The polypeptide is Leukotoxin translocation ATP-binding protein LktB (lktB) (Mannheimia glucosida).